Here is a 266-residue protein sequence, read N- to C-terminus: Protein SCO2 homolog, mitochondrial (266 aa).

The N-terminal 41 residues, 1–41 (MLLLARPPKAWHRLFQLQPLALLGTPGGKTQHVRYQLFSTP), are a transit peptide targeting the mitochondrion. The Mitochondrial matrix segment spans residues 42-60 (GPADTGRQGQPQGPGLRTR). Residues 61–78 (LLVTALVGAGLGGAWLAL) traverse the membrane as a helical segment. Residues 79–266 (RAEKERGRQQ…HMAAFRSVLR (188 aa)) are Mitochondrial intermembrane-facing. The Thioredoxin domain maps to 85–259 (GRQQQRTEAL…ITDSVRRHMA (175 aa)). Cu cation contacts are provided by C133, C137, and H224. C133 and C137 are oxidised to a cystine.

This sequence belongs to the SCO1/2 family. In terms of assembly, homodimer. Interacts with COA6. Found in a complex with TMEM177, COX20, COA6, MT-CO2/COX2, COX18 and SCO1. Interacts with TMEM177 in a COX20-dependent manner. Interacts with COX20 in a MT-CO2/COX2- and COX18-dependent manner. Interacts with COX16.

It localises to the mitochondrion inner membrane. In terms of biological role, copper metallochaperone essential for the synthesis and maturation of cytochrome c oxidase subunit II (MT-CO2/COX2) by facilitating the incorporation of copper into the Cu(A) site of MT-CO2/COX2. Could also act as a thiol-disulfide oxidoreductase to regulate the redox state of the cysteines in SCO1 during maturation of MT-CO2/COX2. This chain is Protein SCO2 homolog, mitochondrial (SCO2), found in Bos taurus (Bovine).